The primary structure comprises 466 residues: Histidine--tRNA ligase (466 aa).

It belongs to the class-II aminoacyl-tRNA synthetase family. Homodimer.

It is found in the cytoplasm. It carries out the reaction tRNA(His) + L-histidine + ATP = L-histidyl-tRNA(His) + AMP + diphosphate + H(+). In Xylella fastidiosa (strain 9a5c), this protein is Histidine--tRNA ligase (hisS).